We begin with the raw amino-acid sequence, 209 residues long: Probable E3 ubiquitin-protein ligase NleG7 (209 aa).

This sequence belongs to the NleG E3 ligase family. Two sizes of protein are detected in situ; only the smaller protein is secreted.

It localises to the secreted. The protein resides in the host cytoplasm. The catalysed reaction is S-ubiquitinyl-[E2 ubiquitin-conjugating enzyme]-L-cysteine + [acceptor protein]-L-lysine = [E2 ubiquitin-conjugating enzyme]-L-cysteine + N(6)-ubiquitinyl-[acceptor protein]-L-lysine.. Its function is as follows. Effector proteins function to alter host cell physiology and promote bacterial survival in host tissues. This protein is probably an E3 ubiquitin-protein ligase that interferes with the host's ubiquitination pathway and targets host proteins for proteasomal degradation. Mice infected with a strain of bacteria deleted for this gene were colonized less quickly by bacteria. The protein is Probable E3 ubiquitin-protein ligase NleG7 of Citrobacter rodentium.